The primary structure comprises 1374 residues: L-2-aminoadipate reductase large subunit (1374 aa).

The region spanning 828–905 is the Carrier domain; that stretch reads SEFNQQEREI…AFAAEVSRLK (78 aa). Ser865 bears the O-(pantetheine 4'-phosphoryl)serine mark.

Belongs to the ATP-dependent AMP-binding enzyme family. Heterodimer of an alpha and a beta subunit. It depends on pantetheine 4'-phosphate as a cofactor.

It catalyses the reaction (S)-2-amino-6-oxohexanoate + NADP(+) + H2O = L-2-aminoadipate + NADPH + 2 H(+). It carries out the reaction (S)-2-amino-6-oxohexanoate + NAD(+) + H2O = L-2-aminoadipate + NADH + 2 H(+). The enzyme catalyses (S)-2-amino-6-oxohexanoate + AMP + diphosphate + NADP(+) = L-2-aminoadipate + ATP + NADPH + H(+). It participates in amino-acid biosynthesis; L-lysine biosynthesis via AAA pathway; L-lysine from L-alpha-aminoadipate (fungal route): step 1/3. Catalyzes the activation of alpha-aminoadipate by ATP-dependent adenylation and the reduction of activated alpha-aminoadipate by NADPH. The activated alpha-aminoadipate is bound to the phosphopantheinyl group of the enzyme itself before it is reduced to (S)-2-amino-6-oxohexanoate. This is L-2-aminoadipate reductase large subunit (LYS2) from Candida glabrata (strain ATCC 2001 / BCRC 20586 / JCM 3761 / NBRC 0622 / NRRL Y-65 / CBS 138) (Yeast).